The primary structure comprises 111 residues: Wound-induced proteinase inhibitor 1 (111 aa).

An N-terminal signal peptide occupies residues 1–23 (MESKFAHIIVFFLLATSFETLMA). The propeptide occupies 24–36 (RKEIDGPEVIELL).

Belongs to the protease inhibitor I13 (potato type I serine protease inhibitor) family.

The protein localises to the secreted. This Solanum lycopersicum (Tomato) protein is Wound-induced proteinase inhibitor 1 (PIIF).